Reading from the N-terminus, the 153-residue chain is MQLTELIETTVTGLGYELVDLERTGRGMVCVYIDQPAGITIDDCEKVTRQLQHVLTVENIDYERLEVSSPGLDRPLKKLADFTRFAGSEAVITLKKPLDGRKTYRGILHAPNGETIGLEFERKKGEAAMLDFTLADVDKARLIPHVDFRSRKQ.

Belongs to the RimP family.

The protein localises to the cytoplasm. In terms of biological role, required for maturation of 30S ribosomal subunits. In Burkholderia pseudomallei (strain 1710b), this protein is Ribosome maturation factor RimP.